The sequence spans 190 residues: Inner membrane-spanning protein YciB (190 aa).

A run of 5 helical transmembrane segments spans residues 22–42 (IYVA…LTFA), 50–70 (MQLI…FLHD), 76–96 (WKVT…HAMG), 118–138 (INWA…YVAF), and 148–168 (FKVF…GFYI).

This sequence belongs to the YciB family.

The protein localises to the cell inner membrane. Plays a role in cell envelope biogenesis, maintenance of cell envelope integrity and membrane homeostasis. The protein is Inner membrane-spanning protein YciB of Vibrio campbellii (strain ATCC BAA-1116).